The following is a 322-amino-acid chain: Lipoyl synthase (322 aa).

C61, C66, C72, C87, C91, C94, and S300 together coordinate [4Fe-4S] cluster. The region spanning 73 to 289 (WDKKHATFMI…ETVAYTKGFL (217 aa)) is the Radical SAM core domain.

This sequence belongs to the radical SAM superfamily. Lipoyl synthase family. The cofactor is [4Fe-4S] cluster.

It localises to the cytoplasm. It catalyses the reaction [[Fe-S] cluster scaffold protein carrying a second [4Fe-4S](2+) cluster] + N(6)-octanoyl-L-lysyl-[protein] + 2 oxidized [2Fe-2S]-[ferredoxin] + 2 S-adenosyl-L-methionine + 4 H(+) = [[Fe-S] cluster scaffold protein] + N(6)-[(R)-dihydrolipoyl]-L-lysyl-[protein] + 4 Fe(3+) + 2 hydrogen sulfide + 2 5'-deoxyadenosine + 2 L-methionine + 2 reduced [2Fe-2S]-[ferredoxin]. It participates in protein modification; protein lipoylation via endogenous pathway; protein N(6)-(lipoyl)lysine from octanoyl-[acyl-carrier-protein]: step 2/2. Its function is as follows. Catalyzes the radical-mediated insertion of two sulfur atoms into the C-6 and C-8 positions of the octanoyl moiety bound to the lipoyl domains of lipoate-dependent enzymes, thereby converting the octanoylated domains into lipoylated derivatives. The sequence is that of Lipoyl synthase from Rhizobium meliloti (strain 1021) (Ensifer meliloti).